The following is a 590-amino-acid chain: 4-oxocyclohex-2-ene-1-carboxylate 5-dehydrogenase (590 aa).

Belongs to the FAD-dependent oxidoreductase 2 family. In terms of assembly, forms multimers. FAD serves as cofactor.

It catalyses the reaction 4-oxocyclohex-2-ene-1-carboxylate + NAD(+) = 4-oxocyclohexa-2,5-diene-1-carboxylate + NADH + H(+). In terms of biological role, desaturase involved in a cyclohexanecarboxylate (CHCA) degradation pathway. Probably catalyzes the conversion of 4-oxocyclohexenecarboxylate to 4-oxocyclohex-2,5-dienecarboxylate, which is spontaneously isomerized to 4-hydroxybenzoate (4-HBA). The chain is 4-oxocyclohex-2-ene-1-carboxylate 5-dehydrogenase from Sinomonas cyclohexanicum (Corynebacterium cyclohexanicum).